Reading from the N-terminus, the 188-residue chain is Peptidyl-tRNA hydrolase (188 aa).

A tRNA-binding site is contributed by Phe-15. His-20 (proton acceptor) is an active-site residue. The tRNA site is built by Tyr-64, Asn-66, and Asn-112.

Belongs to the PTH family. In terms of assembly, monomer.

The protein localises to the cytoplasm. The enzyme catalyses an N-acyl-L-alpha-aminoacyl-tRNA + H2O = an N-acyl-L-amino acid + a tRNA + H(+). In terms of biological role, hydrolyzes ribosome-free peptidyl-tRNAs (with 1 or more amino acids incorporated), which drop off the ribosome during protein synthesis, or as a result of ribosome stalling. Its function is as follows. Catalyzes the release of premature peptidyl moieties from peptidyl-tRNA molecules trapped in stalled 50S ribosomal subunits, and thus maintains levels of free tRNAs and 50S ribosomes. This Borrelia recurrentis (strain A1) protein is Peptidyl-tRNA hydrolase.